Consider the following 179-residue polypeptide: ADP-ribosylation factor-like protein 5B (179 aa).

Residue G2 is the site of N-myristoyl glycine attachment. Residues 23–30 (GLDNAGKT), 66–70 (DIGGQ), 125–128 (NKQD), and A159 contribute to the GTP site.

It belongs to the small GTPase superfamily. Arf family.

Its function is as follows. Binds and exchanges GTP and GDP. The protein is ADP-ribosylation factor-like protein 5B (Arl5b) of Mus musculus (Mouse).